Consider the following 507-residue polypeptide: Beta-glucosidase 3 (507 aa).

Positions 1 to 23 are cleaved as a signal peptide; that stretch reads MELTLSLLTIFLLFFALSGRCSD. Gln41 contributes to the a beta-D-glucoside binding site. Asn64 is a glycosylation site (N-linked (GlcNAc...) asparagine). A beta-D-glucoside-binding positions include His138 and 183–184; that span reads NE. Glu184 serves as the catalytic Proton donor. Cysteines 203 and 210 form a disulfide. Asn209 and Asn214 each carry an N-linked (GlcNAc...) asparagine glycan. Tyr326 is an a beta-D-glucoside binding site. An N-linked (GlcNAc...) asparagine glycan is attached at Asn361. A beta-D-glucoside is bound at residue Glu394. Catalysis depends on Glu394, which acts as the Nucleophile. Asn429 carries an N-linked (GlcNAc...) asparagine glycan. Trp439 and Phe455 together coordinate a beta-D-glucoside. 3 N-linked (GlcNAc...) asparagine glycosylation sites follow: Asn461, Asn485, and Asn500.

This sequence belongs to the glycosyl hydrolase 1 family.

The enzyme catalyses Hydrolysis of terminal, non-reducing beta-D-glucosyl residues with release of beta-D-glucose.. This Arabidopsis thaliana (Mouse-ear cress) protein is Beta-glucosidase 3.